Here is a 245-residue protein sequence, read N- to C-terminus: Probable transcriptional regulatory protein Cbei_4222 (245 aa).

It belongs to the TACO1 family.

Its subcellular location is the cytoplasm. This is Probable transcriptional regulatory protein Cbei_4222 from Clostridium beijerinckii (strain ATCC 51743 / NCIMB 8052) (Clostridium acetobutylicum).